Here is a 172-residue protein sequence, read N- to C-terminus: Early E3 18.5 kDa glycoprotein (172 aa).

A signal peptide spans 1–19; the sequence is MGAILVVLALLSLLGLGSA. At 20–136 the chain is on the lumenal side; that stretch reads NLNPLDHDPC…SKENIVAFSI (117 aa). A glycan (N-linked (GlcNAc...) asparagine; by host) is linked at Asn-36. 2 disulfides stabilise this stretch: Cys-37–Cys-55 and Cys-49–Cys-111. N-linked (GlcNAc...) asparagine; by host glycosylation is found at Asn-68, Asn-72, and Asn-102. Residues 137-157 traverse the membrane as a helical segment; it reads AYCLVTCIITAIICVCIHLLI. The Cytoplasmic portion of the chain corresponds to 158 to 172; it reads VIRPRQSNEEKEKMP. Positions 168 to 172 match the Di-lysine motif motif; that stretch reads KEKMP.

The protein belongs to the adenoviridae E19 family. Post-translationally, both disulfide bonds are absolutely critical for the interaction with MHC antigens. N-glycosylated; high-mannose.

It is found in the host endoplasmic reticulum membrane. In terms of biological role, binds and retains class I heavy chains in the endoplasmic reticulum during the early period of virus infection, thereby impairing their transport to the cell surface. Also delays the expression of class I alleles that it cannot affect by direct retention. Binds transporters associated with antigen processing (TAP) and acts as a tapasin inhibitor, preventing class I/TAP association. In consequence, infected cells are masked for immune recognition by cytotoxic T-lymphocytes. The polypeptide is Early E3 18.5 kDa glycoprotein (Human adenovirus B serotype 3 (HAdV-3)).